A 245-amino-acid chain; its full sequence is Ubiquinone/menaquinone biosynthesis C-methyltransferase UbiE (245 aa).

S-adenosyl-L-methionine is bound by residues T71, D92, and 118–119 (DA).

Belongs to the class I-like SAM-binding methyltransferase superfamily. MenG/UbiE family.

It catalyses the reaction a 2-demethylmenaquinol + S-adenosyl-L-methionine = a menaquinol + S-adenosyl-L-homocysteine + H(+). The catalysed reaction is a 2-methoxy-6-(all-trans-polyprenyl)benzene-1,4-diol + S-adenosyl-L-methionine = a 5-methoxy-2-methyl-3-(all-trans-polyprenyl)benzene-1,4-diol + S-adenosyl-L-homocysteine + H(+). Its pathway is quinol/quinone metabolism; menaquinone biosynthesis; menaquinol from 1,4-dihydroxy-2-naphthoate: step 2/2. It participates in cofactor biosynthesis; ubiquinone biosynthesis. In terms of biological role, methyltransferase required for the conversion of demethylmenaquinol (DMKH2) to menaquinol (MKH2) and the conversion of 2-polyprenyl-6-methoxy-1,4-benzoquinol (DDMQH2) to 2-polyprenyl-3-methyl-6-methoxy-1,4-benzoquinol (DMQH2). This Neisseria gonorrhoeae (strain ATCC 700825 / FA 1090) protein is Ubiquinone/menaquinone biosynthesis C-methyltransferase UbiE.